Here is a 357-residue protein sequence, read N- to C-terminus: NADPH HC-toxin reductase 1 (357 aa).

Residues R40, K47, 68-69 (DL), 88-90 (VAT), Y178, K182, 207-210 (LGLV), and T222 contribute to the NADP(+) site. Residue K182 is the Proton donor of the active site.

Belongs to the NAD(P)-dependent epimerase/dehydratase family.

Its activity is regulated as follows. Activity is sensitive to heat, dependent on NADPH, and inhibited by p-hydroxymercuribenzoate and disulfiram. In terms of biological role, in tandem with Hm2, NADPH-dependent Helminthosporium carbonum (HC) toxin reductase (HCTR), which inactivates HC toxin, a cyclic tetrapeptide produced by the fungus Cochliobolus carbonum to permit infection and acting as an inhibitor of host histone deacetylases (HDACs), thus conferring resistance against C.carbonum race 1 in resistant cultivars (e.g. cv. B73 and cv. Wisconsin 22). Catalyzes the production of 8-hydroxy derivative of HC-toxin via the reduction of the 8-keto group of 2-amino-9,10-epoxy-8-oxo-decanoic acid, an amino acid of the HC-toxin. This Zea mays (Maize) protein is NADPH HC-toxin reductase 1.